Consider the following 245-residue polypeptide: Large ribosomal subunit protein uL3 (245 aa).

An N5-methylglutamine modification is found at Q152. The disordered stretch occupies residues 224-245 (RSKAVQAEAAAPAEAAAPEGDN). Over residues 230-245 (AEAAAPAEAAAPEGDN) the composition is skewed to low complexity.

Belongs to the universal ribosomal protein uL3 family. Part of the 50S ribosomal subunit. Forms a cluster with proteins L14 and L19. In terms of processing, methylated by PrmB.

Its function is as follows. One of the primary rRNA binding proteins, it binds directly near the 3'-end of the 23S rRNA, where it nucleates assembly of the 50S subunit. The chain is Large ribosomal subunit protein uL3 from Paracoccus denitrificans (strain Pd 1222).